Reading from the N-terminus, the 294-residue chain is Very long chain fatty acid elongase 5 (294 aa).

Transmembrane regions (helical) follow at residues 26 to 46 (WLLL…LLIV), 64 to 84 (ILVV…YELV), 112 to 132 (VLWW…FFIL), 141 to 161 (FLHI…MNWV), 172 to 192 (FNSF…IPAI), 207 to 227 (LVQF…PCGF), and 231 to 251 (WLYF…NFYI). Residues 261-294 (AKKDPRHNGIKSVNGHSNGASHTNAVKNRKARTD) are disordered. Positions 274–286 (NGHSNGASHTNAV) are enriched in polar residues.

The protein belongs to the ELO family. ELOVL5 subfamily. As to expression, expression is highest in intestine, followed by brain and heart, and lowest in gill. Also expressed in liver, spleen and muscle.

The protein resides in the endoplasmic reticulum membrane. It localises to the cell projection. It is found in the dendrite. The enzyme catalyses a very-long-chain acyl-CoA + malonyl-CoA + H(+) = a very-long-chain 3-oxoacyl-CoA + CO2 + CoA. The catalysed reaction is (6Z,9Z,12Z)-octadecatrienoyl-CoA + malonyl-CoA + H(+) = (8Z,11Z,14Z)-3-oxoeicosatrienoyl-CoA + CO2 + CoA. It catalyses the reaction (9Z,12Z,15Z)-octadecatrienoyl-CoA + malonyl-CoA + H(+) = (11Z,14Z,17Z)-3-oxoeicosatrienoyl-CoA + CO2 + CoA. It carries out the reaction (9Z)-hexadecenoyl-CoA + malonyl-CoA + H(+) = 3-oxo-(11Z)-octadecenoyl-CoA + CO2 + CoA. The enzyme catalyses (9Z)-octadecenoyl-CoA + malonyl-CoA + H(+) = 3-oxo-(11Z)-eicosenoyl-CoA + CO2 + CoA. The catalysed reaction is (11Z)-octadecenoyl-CoA + malonyl-CoA + H(+) = 3-oxo-(13Z)-eicosenoyl-CoA + CO2 + CoA. It catalyses the reaction (9Z,12Z)-octadecadienoyl-CoA + malonyl-CoA + H(+) = (11Z,14Z)-3-oxoicosa-11,14-dienoyl-CoA + CO2 + CoA. It carries out the reaction (6Z,9Z,12Z,15Z)-octadecatetraenoyl-CoA + malonyl-CoA + H(+) = (8Z,11Z,14Z,17Z)-3-oxoicosatetraenoyl-CoA + CO2 + CoA. The enzyme catalyses (5Z,8Z,11Z,14Z)-eicosatetraenoyl-CoA + malonyl-CoA + H(+) = (7Z,10Z,13Z,16Z)-3-oxodocosatetraenoyl-CoA + CO2 + CoA. The catalysed reaction is (5Z,8Z,11Z,14Z,17Z)-eicosapentaenoyl-CoA + malonyl-CoA + H(+) = 3-oxo-(7Z,10Z,13Z,16Z,19Z)-docosapentaenoyl-CoA + CO2 + CoA. It participates in lipid metabolism; polyunsaturated fatty acid biosynthesis. In terms of biological role, catalyzes the first and rate-limiting reaction of the four reactions that constitute the long-chain fatty acids elongation cycle. This endoplasmic reticulum-bound enzymatic process allows the addition of 2 carbons to the chain of long- and very long-chain fatty acids (VLCFAs) per cycle. Condensing enzyme that acts specifically toward polyunsaturated acyl-CoA with the higher activity toward C18:3(n-6) acyl-CoA. May participate in the production of monounsaturated and of polyunsaturated VLCFAs of different chain lengths that are involved in multiple biological processes as precursors of membrane lipids and lipid mediators. In conditions where the essential linoleic and alpha linoleic fatty acids are lacking it is also involved in the synthesis of Mead acid from oleic acid. The protein is Very long chain fatty acid elongase 5 of Tachysurus fulvidraco (Yellow catfish).